The following is a 564-amino-acid chain: Ribulokinase (564 aa).

This sequence belongs to the ribulokinase family.

It catalyses the reaction D-ribulose + ATP = D-ribulose 5-phosphate + ADP + H(+). It carries out the reaction L-ribulose + ATP = L-ribulose 5-phosphate + ADP + H(+). It functions in the pathway carbohydrate degradation; L-arabinose degradation via L-ribulose; D-xylulose 5-phosphate from L-arabinose (bacterial route): step 2/3. The chain is Ribulokinase from Anoxybacillus flavithermus (strain DSM 21510 / WK1).